A 762-amino-acid chain; its full sequence is 5-methyltetrahydropteroyltriglutamate--homocysteine methyltransferase (762 aa).

5-methyltetrahydropteroyltri-L-glutamate-binding positions include 16–19 (RELK) and lysine 118. L-homocysteine is bound by residues 439 to 441 (IGS) and glutamate 492. L-methionine is bound by residues 439–441 (IGS) and glutamate 492. Residues 523–524 (RC) and tryptophan 569 each bind 5-methyltetrahydropteroyltri-L-glutamate. Aspartate 607 is an L-homocysteine binding site. Residue aspartate 607 participates in L-methionine binding. Glutamate 613 lines the 5-methyltetrahydropteroyltri-L-glutamate pocket. Zn(2+)-binding residues include histidine 649, cysteine 651, and glutamate 673. Histidine 702 acts as the Proton donor in catalysis. Cysteine 734 lines the Zn(2+) pocket.

It belongs to the vitamin-B12 independent methionine synthase family. It depends on Zn(2+) as a cofactor.

The enzyme catalyses 5-methyltetrahydropteroyltri-L-glutamate + L-homocysteine = tetrahydropteroyltri-L-glutamate + L-methionine. It functions in the pathway amino-acid biosynthesis; L-methionine biosynthesis via de novo pathway; L-methionine from L-homocysteine (MetE route): step 1/1. Its function is as follows. Catalyzes the transfer of a methyl group from 5-methyltetrahydrofolate to homocysteine resulting in methionine formation. This chain is 5-methyltetrahydropteroyltriglutamate--homocysteine methyltransferase, found in Pseudomonas entomophila (strain L48).